Reading from the N-terminus, the 188-residue chain is Cell division protein SepF (188 aa).

The protein belongs to the SepF family. In terms of assembly, homodimer. Interacts with FtsZ.

The protein localises to the cytoplasm. Cell division protein that is part of the divisome complex and is recruited early to the Z-ring. Probably stimulates Z-ring formation, perhaps through the cross-linking of FtsZ protofilaments. Its function overlaps with FtsA. In Synechococcus sp. (strain CC9605), this protein is Cell division protein SepF.